The sequence spans 692 residues: Protein arginine N-methyltransferase 7 (692 aa).

2 consecutive SAM-dependent MTase PRMT-type domains span residues 14-359 (ENSW…YSLW) and 368-692 (AKTV…QEKR).

Belongs to the class I-like SAM-binding methyltransferase superfamily. Protein arginine N-methyltransferase family. PRMT7 subfamily.

In terms of biological role, essential arginine methyltransferase that can both catalyze the formation of omega-N monomethylarginine (MMA) and symmetrical dimethylarginine (sDMA). Specifically mediates the symmetrical dimethylation of arginine residues in the small nuclear ribonucleoproteins SmD1 and SmD3. The protein is Protein arginine N-methyltransferase 7 (Art7) of Drosophila pseudoobscura pseudoobscura (Fruit fly).